The chain runs to 286 residues: Phosphoribosylaminoimidazole-succinocarboxamide synthase (286 aa).

This sequence belongs to the SAICAR synthetase family.

The catalysed reaction is 5-amino-1-(5-phospho-D-ribosyl)imidazole-4-carboxylate + L-aspartate + ATP = (2S)-2-[5-amino-1-(5-phospho-beta-D-ribosyl)imidazole-4-carboxamido]succinate + ADP + phosphate + 2 H(+). Its pathway is purine metabolism; IMP biosynthesis via de novo pathway; 5-amino-1-(5-phospho-D-ribosyl)imidazole-4-carboxamide from 5-amino-1-(5-phospho-D-ribosyl)imidazole-4-carboxylate: step 1/2. The polypeptide is Phosphoribosylaminoimidazole-succinocarboxamide synthase (Actinobacillus succinogenes (strain ATCC 55618 / DSM 22257 / CCUG 43843 / 130Z)).